We begin with the raw amino-acid sequence, 381 residues long: Succinate--CoA ligase [ADP-forming] subunit beta (381 aa).

The ATP-grasp domain occupies 9–236 (KELLRVAGVP…ESSEAPSEVD (228 aa)). Residues Lys-45, 52-54 (GRG), Ala-94, and Glu-99 contribute to the ATP site. The Mg(2+) site is built by Asn-191 and Asp-205. Substrate-binding positions include Asn-256 and 313 to 315 (GIT).

This sequence belongs to the succinate/malate CoA ligase beta subunit family. Heterotetramer of two alpha and two beta subunits. It depends on Mg(2+) as a cofactor.

The enzyme catalyses succinate + ATP + CoA = succinyl-CoA + ADP + phosphate. The catalysed reaction is GTP + succinate + CoA = succinyl-CoA + GDP + phosphate. The protein operates within carbohydrate metabolism; tricarboxylic acid cycle; succinate from succinyl-CoA (ligase route): step 1/1. Its function is as follows. Succinyl-CoA synthetase functions in the citric acid cycle (TCA), coupling the hydrolysis of succinyl-CoA to the synthesis of either ATP or GTP and thus represents the only step of substrate-level phosphorylation in the TCA. The beta subunit provides nucleotide specificity of the enzyme and binds the substrate succinate, while the binding sites for coenzyme A and phosphate are found in the alpha subunit. The sequence is that of Succinate--CoA ligase [ADP-forming] subunit beta from Gemmatimonas aurantiaca (strain DSM 14586 / JCM 11422 / NBRC 100505 / T-27).